Here is a 133-residue protein sequence, read N- to C-terminus: Small ribosomal subunit protein uS8 (133 aa).

It belongs to the universal ribosomal protein uS8 family. As to quaternary structure, part of the 30S ribosomal subunit. Contacts proteins S5 and S12.

Functionally, one of the primary rRNA binding proteins, it binds directly to 16S rRNA central domain where it helps coordinate assembly of the platform of the 30S subunit. The chain is Small ribosomal subunit protein uS8 from Trichodesmium erythraeum (strain IMS101).